The chain runs to 310 residues: Fe-S cluster assembly protein dre2 (310 aa).

Disordered stretches follow at residues 1–30 (MAPS…GKRT) and 165–184 (APAP…DDND). Positions 24–154 (ADSGKRTLLL…KMDVGNGAAV (131 aa)) are N-terminal SAM-like domain. Residues 155–202 (PLRLGRKKKAAPAPAPVVQPPPIISSDDNDLNDDELIDEDTLLSADDL) form a linker region. The segment covering 167-177 (APAPVVQPPPI) has biased composition (pro residues). 4 residues coordinate [2Fe-2S] cluster: Cys-212, Cys-223, Cys-226, and Cys-228. The tract at residues 212-228 (CQPKAGKRRRACKDCTC) is fe-S binding site A. 4 residues coordinate [4Fe-4S] cluster: Cys-273, Cys-276, Cys-284, and Cys-287. 2 short sequence motifs (cx2C motif) span residues 273–276 (CGNC) and 284–287 (CDGC). The segment at 273–287 (CGNCALGDAFRCDGC) is fe-S binding site B.

The protein belongs to the anamorsin family. As to quaternary structure, monomer. Interacts with tah18. Interacts with mia40. [2Fe-2S] cluster is required as a cofactor. The cofactor is [4Fe-4S] cluster.

The protein localises to the cytoplasm. The protein resides in the mitochondrion intermembrane space. Its function is as follows. Component of the cytosolic iron-sulfur (Fe-S) protein assembly (CIA) machinery required for the maturation of extramitochondrial Fe-S proteins. Part of an electron transfer chain functioning in an early step of cytosolic Fe-S biogenesis, facilitating the de novo assembly of a [4Fe-4S] cluster on the scaffold complex cfd1-nbp35. Electrons are transferred to dre2 from NADPH via the FAD- and FMN-containing protein tah18. Tah18-dre2 are also required for the assembly of the diferric tyrosyl radical cofactor of ribonucleotide reductase (RNR), probably by providing electrons for reduction during radical cofactor maturation in the catalytic small subunit rnr2. In Emericella nidulans (strain FGSC A4 / ATCC 38163 / CBS 112.46 / NRRL 194 / M139) (Aspergillus nidulans), this protein is Fe-S cluster assembly protein dre2.